The chain runs to 416 residues: Geranyl diphosphate synthase (416 aa).

The Mg(2+) site is built by D157 and D161. The DDXXD motif motif lies at 157 to 161; the sequence is DDIMD.

It belongs to the FPP/GGPP synthase family. Mg(2+) serves as cofactor. As to expression, specifically expressed in the anterior midgut of male beetles, the site of aggregation pheromone biosynthesis.

It carries out the reaction isopentenyl diphosphate + dimethylallyl diphosphate = (2E)-geranyl diphosphate + diphosphate. The protein operates within pheromone biosynthesis. In terms of biological role, geranyl diphosphate synthase involved in pheromone biosynthesis. The sequence is that of Geranyl diphosphate synthase from Ips pini (Pine engraver beetle).